The following is a 2373-amino-acid chain: Highly reducing polyketide synthase (2373 aa).

Residues 19–446 form the Ketosynthase family 3 (KS3) domain; the sequence is QEPIAVVGIA…GSNAHVIVEE (428 aa). Residues C192, H329, and H369 each act as for beta-ketoacyl synthase activity in the active site. Positions 560-874 are malonyl-CoA:ACP transacylase (MAT) domain; the sequence is IFTGQGAQWP…QYTSAMARGA (315 aa). The active-site For malonyltransferase activity is S652. An N-terminal hotdog fold region spans residues 942 to 1078; that stretch reads HDLLGSKVLG…GLIRIDEDVP (137 aa). The segment at 942–1241 is dehydratase (DH) domain; the sequence is HDLLGSKVLG…LSGLRYTRID (300 aa). In terms of domain architecture, PKS/mFAS DH spans 942–1246; the sequence is HDLLGSKVLG…YTRIDTGPSV (305 aa). The Proton acceptor; for dehydratase activity role is filled by H974. The interval 1090–1246 is C-terminal hotdog fold; that stretch reads SHQVDASLWH…YTRIDTGPSV (157 aa). D1154 serves as the catalytic Proton donor; for dehydratase activity. Positions 1669–1985 are enoyl reductase (ER) domain; the sequence is GTTDSLIYSE…SANHIGKIVI (317 aa). Positions 2010–2187 are ketoreductase (KR) domain; that stretch reads GYLLIGGLKG…NSVDLGAIQD (178 aa). Residues 2294-2370 enclose the Carrier domain; sequence AIHDAVIDVT…QLAQKIVARL (77 aa). S2330 carries the post-translational modification O-(pantetheine 4'-phosphoryl)serine.

Requires pantetheine 4'-phosphate as cofactor.

It functions in the pathway mycotoxin biosynthesis. Functionally, highly reducing polyketide synthase; part of the gene cluster that mediates the biosynthesis of brefeldin A (BFA), a protein transport inhibitor that shows antiviral, antifungal, and antitumor properties. The proposed biosynthesis of BFA involves formation of an acyclic polyketide chain that is differentially tailored throughout the backbone. The highly reducing polyketide synthase Bref-PKS is proposed to synthesize the precisely reduced octaketide precursor, which could then be directly offloaded by the thiohydrolase enzyme Bref-TH followed by a cytochrome P450 monooxygenase-mediated formation of the cyclopentane ring and macrocyclization to afford 7-deoxy BFA. Alternatively, the first ring annulation can also occur on the ACP-tethered intermediate before the thiohydrolase release and lactonization. The C7-hydroxylation by another cytochrome P450 monooxygenase is believed to be the final step in the process to obtain the final structure of BFA. In addition to the HRPKS Bref-PKS and the thiohydrolase Bref-TH, the brefeldin A biosynthesis cluster contains 4 cytochrome p450 monooxygenases (called orf3 to orf6), as well a the probable cluster-specific transcription regulator orf8. The protein is Highly reducing polyketide synthase of Eupenicillium brefeldianum (Penicillium brefeldianum).